The sequence spans 55 residues: Mitochondrial import receptor subunit TOM7 homolog (55 aa).

Residues 1–20 (MVKLSKEAKQRLQQLFKGSQ) are Cytoplasmic-facing. The chain crosses the membrane as a helical span at residues 21–36 (FAIRWGFIPLVIYLGF). The Mitochondrial intermembrane segment spans residues 37–55 (KRGADPGMPEPTVLSLLWG).

Belongs to the Tom7 family. In terms of assembly, forms part of the preprotein translocase complex of the outer mitochondrial membrane (TOM complex) which consists of at least 7 different proteins (TOMM5, TOMM6, TOMM7, TOMM20, TOMM22, TOMM40 and TOMM70).

It is found in the mitochondrion outer membrane. Its function is as follows. Required for assembly and stability of the TOM complex. Positive regulator of PRKN translocation to damaged mitochondria. Acts probably by stabilizing PINK1 on the outer membrane of depolarized mitochondria. In Homo sapiens (Human), this protein is Mitochondrial import receptor subunit TOM7 homolog (TOMM7).